Reading from the N-terminus, the 210-residue chain is Large ribosomal subunit protein uL4 (210 aa).

The interval 56–80 (FVSGGGKKPWRQKGTGRARAGSTRS) is disordered.

Belongs to the universal ribosomal protein uL4 family. Part of the 50S ribosomal subunit.

In terms of biological role, one of the primary rRNA binding proteins, this protein initially binds near the 5'-end of the 23S rRNA. It is important during the early stages of 50S assembly. It makes multiple contacts with different domains of the 23S rRNA in the assembled 50S subunit and ribosome. Functionally, forms part of the polypeptide exit tunnel. This is Large ribosomal subunit protein uL4 from Solidesulfovibrio magneticus (strain ATCC 700980 / DSM 13731 / RS-1) (Desulfovibrio magneticus).